Consider the following 472-residue polypeptide: Glutamate--tRNA ligase (472 aa).

The 'HIGH' region signature appears at 7–17; that stretch reads PSPTGFLHVGG. The Zn(2+) site is built by cysteine 96, cysteine 98, cysteine 123, and histidine 125. Basic and acidic residues predominate over residues 112–129; sequence ARKEKPRYDGRCRHRSEP. The interval 112 to 134 is disordered; sequence ARKEKPRYDGRCRHRSEPPSDQP. The short motif at 234 to 238 is the 'KMSKS' region element; the sequence is KLSKR. Lysine 237 contacts ATP.

The protein belongs to the class-I aminoacyl-tRNA synthetase family. Glutamate--tRNA ligase type 1 subfamily. In terms of assembly, monomer. Zn(2+) is required as a cofactor.

The protein localises to the cytoplasm. It carries out the reaction tRNA(Glu) + L-glutamate + ATP = L-glutamyl-tRNA(Glu) + AMP + diphosphate. Its function is as follows. Catalyzes the attachment of glutamate to tRNA(Glu) in a two-step reaction: glutamate is first activated by ATP to form Glu-AMP and then transferred to the acceptor end of tRNA(Glu). The polypeptide is Glutamate--tRNA ligase (Magnetococcus marinus (strain ATCC BAA-1437 / JCM 17883 / MC-1)).